The sequence spans 270 residues: 3-phenylpropionate-dihydrodiol/cinnamic acid-dihydrodiol dehydrogenase (270 aa).

An NAD(+)-binding site is contributed by Phe10 to Ala34. Position 143 (Ser143) interacts with substrate. Catalysis depends on Tyr156, which acts as the Proton acceptor.

This sequence belongs to the short-chain dehydrogenases/reductases (SDR) family.

It catalyses the reaction 3-(cis-5,6-dihydroxycyclohexa-1,3-dien-1-yl)propanoate + NAD(+) = 3-(2,3-dihydroxyphenyl)propanoate + NADH + H(+). It carries out the reaction (2E)-3-(cis-5,6-dihydroxycyclohexa-1,3-dien-1-yl)prop-2-enoate + NAD(+) = (2E)-3-(2,3-dihydroxyphenyl)prop-2-enoate + NADH + H(+). Its pathway is aromatic compound metabolism; 3-phenylpropanoate degradation. Its function is as follows. Converts 3-phenylpropionate-dihydrodiol (PP-dihydrodiol) and cinnamic acid-dihydrodiol (CI-dihydrodiol) into 3-(2,3-dihydroxylphenyl)propanoic acid (DHPP) and 2,3-dihydroxicinnamic acid (DHCI), respectively. In Shigella sonnei (strain Ss046), this protein is 3-phenylpropionate-dihydrodiol/cinnamic acid-dihydrodiol dehydrogenase.